Here is a 23-residue protein sequence, read N- to C-terminus: ACGSCRKKCKGSGKCINGRCKCY.

3 disulfide bridges follow: C2–C15, C5–C20, and C9–C22. Residues 13–20 (GKCINGRC) are interaction with Ca(2+)-activated K(+) channels.

Expressed by the venom gland.

The protein localises to the secreted. Blocks reversibly Shaker B potassium channels. Also displaces binding of noxiustoxin to mouse brain synaptosome membranes. In Tityus obscurus (Amazonian scorpion), this protein is Potassium channel toxin alpha-KTx 13.1.